The following is a 166-amino-acid chain: Disulfide bond formation protein B (166 aa).

Topologically, residues Met1–Thr12 are cytoplasmic. A helical membrane pass occupies residues Ala13–Tyr29. At Met30 to Ile47 the chain is on the periplasmic side. Cys39 and Cys42 are joined by a disulfide. Residues Phe48 to Pro64 form a helical membrane-spanning segment. Over Ala65 to Lys70 the chain is Cytoplasmic. A helical transmembrane segment spans residues Val71 to Ala88. Over Arg89 to Gly145 the chain is Periplasmic. Cys104 and Cys131 are joined by a disulfide. A helical membrane pass occupies residues Trp146–Arg164. The Cytoplasmic portion of the chain corresponds to Lys165 to Ala166.

This sequence belongs to the DsbB family.

Its subcellular location is the cell inner membrane. Functionally, required for disulfide bond formation in some periplasmic proteins. Acts by oxidizing the DsbA protein. The sequence is that of Disulfide bond formation protein B from Saccharophagus degradans (strain 2-40 / ATCC 43961 / DSM 17024).